A 221-amino-acid chain; its full sequence is Epididymal secretory glutathione peroxidase (221 aa).

An N-terminal signal peptide occupies residues 1–21 (MTAWLGASYVLPILLVSFVQT). Residue cysteine 73 is part of the active site.

Belongs to the glutathione peroxidase family. In terms of tissue distribution, epididymis.

The protein resides in the secreted. It carries out the reaction 2 glutathione + H2O2 = glutathione disulfide + 2 H2O. In terms of biological role, protects cells and enzymes from oxidative damage, by catalyzing the reduction of hydrogen peroxide, lipid peroxides and organic hydroperoxide, by glutathione. May constitute a glutathione peroxidase-like protective system against peroxide damage in sperm membrane lipids. This chain is Epididymal secretory glutathione peroxidase (GPX5), found in Canis lupus familiaris (Dog).